A 686-amino-acid polypeptide reads, in one-letter code: MIQSFLKQVSTKPELIILVLMVMIIAMLIIPLPTYLVDFLIGLNIVLAILVFMGSFYIERILSFSTFPSVLLITTLFRLALSISTSRLILVDADAGKIITTFGQFVIGDSLAVGFVIFSIVTVVQFIVITKGSERVAEVAARFSLDGMPGKQMSIDADLKAGIIDAAGAKERRSILERESQLYGSFDGAMKFIKGDAIAGIIIIFVNLIGGISVGMSQHGMSLSGALSTYTILTIGDGLVSQIPALLISISAGFIVTRVNGDSDNMGRNIMSQIFGNPFVLIVTSALALAIGMLPGFPFFVFFLIAVTLTALFYYKKVVEKEKSLSESDSSGYTGTFDIDNSHDSSLAMIENLDAISSETVPLILLFAENKINANDMEGLIERIRSQFFIDYGVRLPTILYRTSNELKVDDIVLLINEVRADSFNIYFDKVCITDENGDIDALGIPVVSTSYNERVISWVDVSYTENLTNIDAKIKSAQDEFYHQLSQALLNNINEIFGIQETKNMLDQFENRYPDLLKEVFRHVTIQRISEVLQRLLGENISVRNLKLIMESLALWAPREKDVITLVEHVRASLSRYICSKIAVSGEIKVVMLSGYIEDAIRKGIRQTSGGSFLNMDIEVSDEVMETLAHALRELRNAKKNFVLLVSVDIRRFVKRLIDNRFKSILVISYAEIDEAYTINVLKTI.

The next 6 helical transmembrane spans lie at 28–52 (LIIP…ILVF), 105–129 (FVIG…FIVI), 197–216 (AIAG…SVGM), 232–256 (ILTI…GFIV), 274–292 (IFGN…LAIG), and 299–315 (FFVF…LFYY).

This sequence belongs to the FHIPEP (flagella/HR/invasion proteins export pore) family.

The protein resides in the cell inner membrane. In terms of biological role, necessary for the secretion of IPA invasins. In Shigella flexneri, this protein is Protein MxiA (mxiA).